We begin with the raw amino-acid sequence, 806 residues long: Lon protease 1 (806 aa).

The Lon N-terminal domain occupies 31–235; sequence VPLIAVPSHP…KVLELIYEEL (205 aa). 389–396 serves as a coordination point for ATP; that stretch reads GPPGVGKT. The 181-residue stretch at 626-806 folds into the Lon proteolytic domain; sequence AMYSGMVMGL…NMREVIKLLF (181 aa). Active-site residues include S714 and K757.

Belongs to the peptidase S16 family. Homohexamer. Organized in a ring with a central cavity.

It localises to the cytoplasm. The catalysed reaction is Hydrolysis of proteins in presence of ATP.. ATP-dependent serine protease that mediates the selective degradation of mutant and abnormal proteins as well as certain short-lived regulatory proteins. Required for cellular homeostasis and for survival from DNA damage and developmental changes induced by stress. Degrades polypeptides processively to yield small peptide fragments that are 5 to 10 amino acids long. Binds to DNA in a double-stranded, site-specific manner. The protein is Lon protease 1 of Borreliella burgdorferi (strain ATCC 35210 / DSM 4680 / CIP 102532 / B31) (Borrelia burgdorferi).